We begin with the raw amino-acid sequence, 892 residues long: Alanine--tRNA ligase (892 aa).

Zn(2+) is bound by residues H594, H598, C702, and H706.

It belongs to the class-II aminoacyl-tRNA synthetase family. Zn(2+) is required as a cofactor.

The protein resides in the cytoplasm. It carries out the reaction tRNA(Ala) + L-alanine + ATP = L-alanyl-tRNA(Ala) + AMP + diphosphate. Functionally, catalyzes the attachment of alanine to tRNA(Ala) in a two-step reaction: alanine is first activated by ATP to form Ala-AMP and then transferred to the acceptor end of tRNA(Ala). Also edits incorrectly charged Ser-tRNA(Ala) and Gly-tRNA(Ala) via its editing domain. This Pyrobaculum aerophilum (strain ATCC 51768 / DSM 7523 / JCM 9630 / CIP 104966 / NBRC 100827 / IM2) protein is Alanine--tRNA ligase.